The primary structure comprises 380 residues: S-adenosylmethionine synthase (380 aa).

His-15 is a binding site for ATP. Asp-17 contacts Mg(2+). Glu-43 is a K(+) binding site. Glu-56 and Gln-99 together coordinate L-methionine. Residues 99–109 (QSPDIAMGIDN) form a flexible loop region. ATP is bound by residues 164–166 (DAK), 230–231 (RF), Asp-239, 245–246 (RK), and Lys-266. Asp-239 provides a ligand contact to L-methionine. Lys-270 is an L-methionine binding site.

The protein belongs to the AdoMet synthase family. As to quaternary structure, homotetramer; dimer of dimers. The cofactor is Mg(2+). K(+) serves as cofactor.

It localises to the cytoplasm. The catalysed reaction is L-methionine + ATP + H2O = S-adenosyl-L-methionine + phosphate + diphosphate. It participates in amino-acid biosynthesis; S-adenosyl-L-methionine biosynthesis; S-adenosyl-L-methionine from L-methionine: step 1/1. In terms of biological role, catalyzes the formation of S-adenosylmethionine (AdoMet) from methionine and ATP. The overall synthetic reaction is composed of two sequential steps, AdoMet formation and the subsequent tripolyphosphate hydrolysis which occurs prior to release of AdoMet from the enzyme. This is S-adenosylmethionine synthase from Rickettsia prowazekii (strain Madrid E).